A 490-amino-acid chain; its full sequence is MVSDVSGYTGSLSHVTFKLYNTATHGIETFKPLREGQVSIYHCGMTVQSSPHLGHIRKEVVFDVLRRWLECSGYRVTVVANVTDIDDKILAKSAAAGTPWWAHAYHYENELHAAYKALGCRPPTYEPRATGHIPEMIELVKTLIEKGHAYPAPDGSGDVYFDVRSWPRYGELSGIRVDEMSPAEDSDPRGKRDPRDFALWKGHKEDEPETASWVSPWGRGRPGWHLECSAMSGKYLGEAFDIHGGGIDLRFPHHENELAQSAAAGRPFAHYWMHNAWVTMSGEKMSKSLGNTAQVSEVTKTYSPRAVRYFLLAPHYRSMIEFSPSDEGTMGSLDEATKAIERIDSFLDRASNLVGEQVTASHELSEAFVTAMDDDLGTPQAVAALFSQITEGNKSVSIGDAEATRHHLSQVKAMLAVFGLDPQAPEWADVAGSDDRLEPVVDGLVHAMLEQRAEARARKDWATADAIRDTLTNLGLTIEDTPAGAHWSLS.

Cys-43 is a binding site for Zn(2+). The 'HIGH' region motif lies at 45 to 55; the sequence is MTVQSSPHLGH. The segment at 177 to 204 is disordered; sequence VDEMSPAEDSDPRGKRDPRDFALWKGHK. A compositionally biased stretch (basic and acidic residues) spans 186-204; sequence SDPRGKRDPRDFALWKGHK. Positions 228, 253, and 257 each coordinate Zn(2+). The 'KMSKS' region motif lies at 284-288; sequence KMSKS. Lys-287 contributes to the ATP binding site.

The protein belongs to the class-I aminoacyl-tRNA synthetase family. Monomer. The cofactor is Zn(2+).

The protein localises to the cytoplasm. It catalyses the reaction tRNA(Cys) + L-cysteine + ATP = L-cysteinyl-tRNA(Cys) + AMP + diphosphate. The polypeptide is Cysteine--tRNA ligase (Cutibacterium acnes (strain DSM 16379 / KPA171202) (Propionibacterium acnes)).